A 351-amino-acid polypeptide reads, in one-letter code: Phosphoribosylformylglycinamidine cyclo-ligase (351 aa).

It belongs to the AIR synthase family.

It is found in the cytoplasm. It carries out the reaction 2-formamido-N(1)-(5-O-phospho-beta-D-ribosyl)acetamidine + ATP = 5-amino-1-(5-phospho-beta-D-ribosyl)imidazole + ADP + phosphate + H(+). It participates in purine metabolism; IMP biosynthesis via de novo pathway; 5-amino-1-(5-phospho-D-ribosyl)imidazole from N(2)-formyl-N(1)-(5-phospho-D-ribosyl)glycinamide: step 2/2. In Synechococcus sp. (strain JA-3-3Ab) (Cyanobacteria bacterium Yellowstone A-Prime), this protein is Phosphoribosylformylglycinamidine cyclo-ligase.